Reading from the N-terminus, the 529-residue chain is 56 kDa type-specific antigen (529 aa).

Positions 1 to 22 are cleaved as a signal peptide; the sequence is MKKIMLIASAMSALSLPFSASA. The helical transmembrane segment at 67–87 threads the bilayer; it reads LTTSMPFGGTLAAGMTIAPGF. The segment covering 106–116 has biased composition (basic and acidic residues); that stretch reads GKTGSDADIRS. 2 disordered regions span residues 106 to 134 and 392 to 424; these read GKTG…PQPT and DGGC…KGKE. Residues 477 to 492 traverse the membrane as a helical segment; the sequence is TGMVASGALGVAINAA.

Its subcellular location is the cell membrane. May be an adherent factor for rickettsial adsorption to the host-cell surface and a determinant of virulence of individual rickettsial strain. It is the major outer membrane protein. This chain is 56 kDa type-specific antigen, found in Orientia tsutsugamushi (Rickettsia tsutsugamushi).